Consider the following 406-residue polypeptide: CinA-like protein (406 aa).

It belongs to the CinA family.

This Thermomicrobium roseum (strain ATCC 27502 / DSM 5159 / P-2) protein is CinA-like protein.